A 367-amino-acid polypeptide reads, in one-letter code: Carbohydrate sulfotransferase 14 (367 aa).

The Cytoplasmic portion of the chain corresponds to 1 to 34; it reads MPPRKKEYGIKRASGSLVHFRAPVSATTIRRHSA. A helical; Signal-anchor for type II membrane protein membrane pass occupies residues 35-55; the sequence is VVPSVLTFAVIVASGGLLLMI. The Lumenal segment spans residues 56 to 367; the sequence is EKGMLNSVQT…PNTTTEYCRH (312 aa). Asparagine 99 is a glycosylation site (N-linked (GlcNAc...) asparagine). Residues 144 to 150 and 202 to 210 contribute to the 3'-phosphoadenylyl sulfate site; these read PKVACSN and REPMARLLS. N-linked (GlcNAc...) asparagine glycosylation occurs at asparagine 359.

This sequence belongs to the sulfotransferase 2 family.

The protein localises to the golgi apparatus membrane. Catalyzes the transfer of sulfate to position 4 of the N-acetylgalactosamine (GalNAc) residue of dermatan sulfate. This chain is Carbohydrate sulfotransferase 14 (chst14), found in Danio rerio (Zebrafish).